The sequence spans 638 residues: Sodium- and chloride-dependent glycine transporter 1 (638 aa).

Residues 1 to 30 (MAVAHGPVATSSPEQNGAVPSEATKKDQNL) form a disordered region. Over 1–40 (MAVAHGPVATSSPEQNGAVPSEATKKDQNLTRGNWGNQIE) the chain is Cytoplasmic. The next 3 membrane-spanning stretches (helical) occupy residues 41 to 61 (FVLT…FPYL), 68 to 88 (GAFM…LFFM), and 120 to 140 (VSTY…YYFF). At 141 to 217 (SSMTHVLPWA…LSDDIGDFGE (77 aa)) the chain is on the extracellular side. 4 N-linked (GlcNAc...) asparagine glycosylation sites follow: N169, N172, N182, and N188. 9 helical membrane-spanning segments follow: residues 218-238 (VRLP…LCLI), 247-267 (VVYF…VRGV), 292-312 (VWGD…GGLI), 339-359 (SVYA…HLGV), 382-402 (LLPI…LLGL), 438-458 (VAGF…WLLL), 462-482 (YAAS…IMYI), 502-522 (LFFQ…ILIF), and 542-562 (VAIG…YALF). Residues 563 to 638 (QLCRTDGDTL…GSSRLQDSRI (76 aa)) are Cytoplasmic-facing. A Phosphothreonine modification is found at T603. S605 and S630 each carry phosphoserine. Positions 627–638 (SNGSSRLQDSRI) are essential for interaction with EXOC1.

Belongs to the sodium:neurotransmitter symporter (SNF) (TC 2.A.22) family. SLC6A9 subfamily. Interacts with EXOC1; interaction increases the transporter capacity of SLC6A9 probably by promoting its insertion into the cell membrane. Interacts with EXOC3 and EXOC4. In terms of tissue distribution, found only in the white matter of the CNS. As to expression, found in the gray matter of CNS as well as in macrophages and mast cells in peripheral tissues.

The protein localises to the cell membrane. The catalysed reaction is glycine(out) + chloride(out) + 2 Na(+)(out) = glycine(in) + chloride(in) + 2 Na(+)(in). Its activity is regulated as follows. Inhibited by sarcosine. Sodium- and chloride-dependent glycine transporter. Essential for regulating glycine concentrations at inhibitory glycinergic synapses. This chain is Sodium- and chloride-dependent glycine transporter 1 (Slc6a9), found in Rattus norvegicus (Rat).